Here is a 498-residue protein sequence, read N- to C-terminus: Ulvan-active sulfatase (498 aa).

Positions 1–22 are cleaved as a signal peptide; that stretch reads MNSKKTGVIILGCIAFLHIACS. Ca(2+)-binding residues include Asp55, Asp56, Cys95, Asp266, and His267. The active-site Nucleophile is Cys95. Residue Cys95 is modified to 3-oxoalanine (Cys).

The protein belongs to the sulfatase family. Ca(2+) is required as a cofactor. In terms of processing, the conversion to 3-oxoalanine (also known as C-formylglycine, FGly), of a serine or cysteine residue in prokaryotes and of a cysteine residue in eukaryotes, is critical for catalytic activity. This post-translational modification is severely defective in multiple sulfatase deficiency (MSD).

It localises to the periplasm. In terms of biological role, sulfatase involved in ulvan degradation. Ulvan is the main polysaccharide component of the Ulvales (green seaweed) cell wall. It is composed of disaccharide building blocks comprising 3-sulfated rhamnose (Rha3S) linked to D-glucuronic acid (GlcA), L-iduronic acid (IduA), or D-xylose (Xyl). In Formosa agariphila (strain DSM 15362 / KCTC 12365 / LMG 23005 / KMM 3901 / M-2Alg 35-1), this protein is Ulvan-active sulfatase.